We begin with the raw amino-acid sequence, 337 residues long: MLQYDKDVVLSSRIRLARNVKDIPFPTVMTEEQGKKVIELARKAILGSNTILSTQFTEYEMKKLTPLDRQALVEKHLISPDLSQNIKTGYALIKDDNTVSIMVNEEDHLRIQCILPGLKLDESWDMADKIDDLIEETIDYAYDEKIGYLTSCPTNVGTGIRASVMVHLPALTITGQISNILNSVSKIGMAVRGIYGEGTQALGDIYQISNQVTLGQSEKEIIENIEGVAKQIISSERRAREELYKKQRVQIEDRVGRAFGILSHAKVMSTKEYMTLMSDVRLGIVLGILSVDLDKLDRLTTQIQPANLQKIYGMQLNPYERDVKRAEYVSTQLNKKE.

The Phosphagen kinase C-terminal domain occupies 8 to 239 (VVLSSRIRLA…KQIISSERRA (232 aa)). Residues 11–15 (SSRIR), His76, Arg110, 161–165 (RASVM), and 192–197 (RGIYGE) contribute to the ATP site. The RDXXRA motif of the pArg binding pocket involved in allosteric regulation motif lies at 321–326 (RDVKRA).

It belongs to the ATP:guanido phosphotransferase family.

It carries out the reaction L-arginyl-[protein] + ATP = N(omega)-phospho-L-arginyl-[protein] + ADP + H(+). Its activity is regulated as follows. Appears to be allosterically activated by the binding of pArg-containing polypeptides to the pArg-binding pocket localized in the C-terminal domain of McsB. Catalyzes the specific phosphorylation of arginine residues in proteins. The polypeptide is Protein-arginine kinase (Caldanaerobacter subterraneus subsp. tengcongensis (strain DSM 15242 / JCM 11007 / NBRC 100824 / MB4) (Thermoanaerobacter tengcongensis)).